A 1041-amino-acid polypeptide reads, in one-letter code: Nuclear pore complex protein NUP98A (1041 aa).

Positions 1 to 34 (MFGSSNPFGQSSGTSPFGSQSLFGQTSNTSSNNP) are enriched in polar residues. The interval 1 to 44 (MFGSSNPFGQSSGTSPFGSQSLFGQTSNTSSNNPFAPATPFGTS) is disordered. Tandem repeats lie at residues 2–3 (FG), 8–9 (FG), 17–18 (FG), 23–24 (FG), 41–42 (FG), 56–57 (FG), 64–65 (FG), 79–80 (FG), 87–88 (FG), 94–95 (FG), 103–104 (FG), 109–110 (FG), 124–125 (FG), 135–136 (FG), 140–141 (FG), 146–147 (FG), 154–155 (FG), 162–163 (FG), 170–171 (FG), 178–179 (FG), 186–187 (FG), 194–195 (FG), 202–203 (FG), 210–211 (FG), 217–218 (FG), 222–223 (FG), 228–229 (FG), 236–237 (FG), 244–245 (FG), 252–253 (FG), 260–261 (FG), 268–269 (FG), 276–277 (FG), 284–285 (FG), 294–295 (FG), 300–301 (FG), 307–308 (FG), 312–313 (FG), 319–320 (FG), 329–330 (FG), 334–335 (FG), 339–340 (FG), 411–412 (FG), and 427–428 (FG). The segment at 2–677 (FGSSNPFGQS…QPVAVTNPFG (676 aa)) is 65 X 2 AA repeats of F-G. The disordered stretch occupies residues 98–171 (PASSPFGGSS…FGATSTPSFG (74 aa)). A compositionally biased stretch (polar residues) spans 117-171 (STPQSNPFGNSTQQSQPAFGNTSFGSSTPFGATNTPAFGAPSTPSFGATSTPSFG). Disordered regions lie at residues 315–347 (TPSPFGGAQASTPTFGGSGFGQSTFGGQQGGSR) and 392–447 (QRGD…TNPF). Residues 430 to 447 (TSANPTNPFSSSTSTNPF) are compositionally biased toward low complexity. 21 repeat units span residues 459 to 460 (FG), 466 to 467 (FG), 471 to 472 (FG), 480 to 481 (FG), 491 to 492 (FG), 497 to 498 (FG), 506 to 507 (FG), 514 to 515 (FG), 521 to 522 (FG), 533 to 534 (FG), 555 to 556 (FG), 562 to 563 (FG), 565 to 566 (FG), 573 to 574 (FG), 586 to 587 (FG), 604 to 605 (FG), 627 to 628 (FG), 632 to 633 (FG), 650 to 651 (FG), 655 to 656 (FG), and 676 to 677 (FG). Low complexity predominate over residues 517–526 (SSSIFGSAPG). Positions 517–560 (SSSIFGSAPGQGATPAFGNSQPSTLFNSTPSTGQTGSAFGQTGS) are disordered. Over residues 533 to 560 (FGNSQPSTLFNSTPSTGQTGSAFGQTGS) the composition is skewed to polar residues. Residues 734-860 (KYRPGENGPK…KERPYKTLSG (127 aa)) form a disordered region. Positions 782–793 (SRDKSILPKEQR) are enriched in basic and acidic residues. Residues 831 to 846 (TSVNANQKPNGTTRSD) are compositionally biased toward polar residues. Positions 885-1027 (QSDYFTEPRI…GEWKFRVEHF (143 aa)) constitute a Peptidase S59 domain.

It belongs to the nucleoporin GLFG family. Part of the nuclear pore complex (NPC). The NPC has an eight-fold symmetrical structure comprising a central transport channel and two rings, the cytoplasmic and nuclear rings, to which eight filaments are attached. The cytoplasmic filaments have loose ends, while the nuclear filaments are joined in a distal ring, forming a nuclear basket. NPCs are highly dynamic in configuration and composition, and can be devided in 3 subcomplexes, the NUP62 subcomplex, the NUP107-160 subcomplex and the NUP93 subcomplex, containing approximately 30 different nucleoporin proteins.

It is found in the nucleus. It localises to the nuclear pore complex. This Arabidopsis thaliana (Mouse-ear cress) protein is Nuclear pore complex protein NUP98A.